A 346-amino-acid chain; its full sequence is Large ribosomal subunit protein uL10 (346 aa).

Residues 307–346 are disordered; sequence AAAVAKEPEKKEEVKEEEEEEEEEDHSEEDGMAGLGSLFG. The segment covering 321 to 337 has biased composition (acidic residues); that stretch reads KEEEEEEEEEDHSEEDG.

Belongs to the universal ribosomal protein uL10 family. In terms of assembly, part of the 50S ribosomal subunit. Forms part of the ribosomal stalk which helps the ribosome interact with GTP-bound translation factors. Forms both a pentameric L10(L12)2(L12)2 and heptameric L10(L12)2(L12)2(L12)2 complex, where L10 forms an elongated spine to which the L12 dimers bind in a sequential fashion. The proportion of heptameric complexes increases during cell growth.

In terms of biological role, forms part of the ribosomal stalk, playing a central role in the interaction of the ribosome with GTP-bound translation factors. This is Large ribosomal subunit protein uL10 from Methanosarcina barkeri (strain Fusaro / DSM 804).